A 232-amino-acid polypeptide reads, in one-letter code: Small ribosomal subunit protein uS2 (232 aa).

It belongs to the universal ribosomal protein uS2 family.

This is Small ribosomal subunit protein uS2 from Natranaerobius thermophilus (strain ATCC BAA-1301 / DSM 18059 / JW/NM-WN-LF).